A 122-amino-acid chain; its full sequence is Large ribosomal subunit protein bL12 (122 aa).

Belongs to the bacterial ribosomal protein bL12 family. As to quaternary structure, homodimer. Part of the ribosomal stalk of the 50S ribosomal subunit. Forms a multimeric L10(L12)X complex, where L10 forms an elongated spine to which 2 to 4 L12 dimers bind in a sequential fashion. Binds GTP-bound translation factors.

In terms of biological role, forms part of the ribosomal stalk which helps the ribosome interact with GTP-bound translation factors. Is thus essential for accurate translation. The sequence is that of Large ribosomal subunit protein bL12 from Bdellovibrio bacteriovorus (strain ATCC 15356 / DSM 50701 / NCIMB 9529 / HD100).